Consider the following 277-residue polypeptide: Protein RKD3 (277 aa).

Residues 142-226 (KRIIMKRRYR…LGNTKGRTPK (85 aa)) enclose the RWP-RK domain. Residues 201–246 (RKLTSLNALIANLKDLLGNTKGRTPKSKLRNALELLEMEKKMIEEV) are a coiled coil.

It localises to the nucleus. Functionally, putative transcription factor. The protein is Protein RKD3 (RKD3) of Arabidopsis thaliana (Mouse-ear cress).